A 235-amino-acid polypeptide reads, in one-letter code: Large ribosomal subunit protein uL1 (235 aa).

It belongs to the universal ribosomal protein uL1 family. As to quaternary structure, part of the 50S ribosomal subunit.

Functionally, binds directly to 23S rRNA. The L1 stalk is quite mobile in the ribosome, and is involved in E site tRNA release. In terms of biological role, protein L1 is also a translational repressor protein, it controls the translation of the L11 operon by binding to its mRNA. This chain is Large ribosomal subunit protein uL1, found in Mycobacterium leprae (strain Br4923).